A 209-amino-acid polypeptide reads, in one-letter code: MGKVYVFDHPLIQHKLTYIRDVKTGTKEFRELVDEVATLMAFEITRDLPLEEVNVETPVQMAKSNVIAGKKLGVVPILRAGLGMVDGILKLIPAAKVGHVGLYRDPETLKPVEYYVKLPSDVEEREFIVVDPMLATGGSAVEALNSLKKRGAKNIRFMCLIAAPEGVDEVQKHHPDVDIYIAALDEKLNEKGYIVPGLGDAGDRMFGTK.

Residues Arg-79, Arg-104, and 131–139 (DPMLATGGS) contribute to the 5-phospho-alpha-D-ribose 1-diphosphate site. Uracil-binding positions include Ile-194 and 199-201 (GDA). Position 200 (Asp-200) interacts with 5-phospho-alpha-D-ribose 1-diphosphate.

Belongs to the UPRTase family. Mg(2+) serves as cofactor.

The enzyme catalyses UMP + diphosphate = 5-phospho-alpha-D-ribose 1-diphosphate + uracil. The protein operates within pyrimidine metabolism; UMP biosynthesis via salvage pathway; UMP from uracil: step 1/1. Allosterically activated by GTP. In terms of biological role, catalyzes the conversion of uracil and 5-phospho-alpha-D-ribose 1-diphosphate (PRPP) to UMP and diphosphate. The polypeptide is Uracil phosphoribosyltransferase (Bacillus licheniformis (strain ATCC 14580 / DSM 13 / JCM 2505 / CCUG 7422 / NBRC 12200 / NCIMB 9375 / NCTC 10341 / NRRL NRS-1264 / Gibson 46)).